Here is a 327-residue protein sequence, read N- to C-terminus: Probable cell division protein WhiA (327 aa).

Positions 275 to 308 (SLEELGQLADPPMTKDAVAGRIRRLLSMADRRAR) form a DNA-binding region, H-T-H motif.

Belongs to the WhiA family.

Functionally, involved in cell division and chromosome segregation. This is Probable cell division protein WhiA from Nocardia farcinica (strain IFM 10152).